The primary structure comprises 294 residues: Bifunctional protein FolD (294 aa).

Residues 166–168 (GRS), Ser191, and Ile232 each bind NADP(+).

It belongs to the tetrahydrofolate dehydrogenase/cyclohydrolase family. As to quaternary structure, homodimer.

It carries out the reaction (6R)-5,10-methylene-5,6,7,8-tetrahydrofolate + NADP(+) = (6R)-5,10-methenyltetrahydrofolate + NADPH. The catalysed reaction is (6R)-5,10-methenyltetrahydrofolate + H2O = (6R)-10-formyltetrahydrofolate + H(+). The protein operates within one-carbon metabolism; tetrahydrofolate interconversion. Its function is as follows. Catalyzes the oxidation of 5,10-methylenetetrahydrofolate to 5,10-methenyltetrahydrofolate and then the hydrolysis of 5,10-methenyltetrahydrofolate to 10-formyltetrahydrofolate. This is Bifunctional protein FolD from Nitrobacter winogradskyi (strain ATCC 25391 / DSM 10237 / CIP 104748 / NCIMB 11846 / Nb-255).